A 370-amino-acid chain; its full sequence is tRNA N(3)-cytidine methyltransferase METTL2 (370 aa).

Tryptophan 72, tyrosine 76, glycine 181, aspartate 206, aspartate 232, leucine 233, and isoleucine 253 together coordinate S-adenosyl-L-methionine.

This sequence belongs to the methyltransferase superfamily. METL family. In terms of assembly, monomer.

Its subcellular location is the cytoplasm. The enzyme catalyses cytidine(32) in tRNA(Thr) + S-adenosyl-L-methionine = N(3)-methylcytidine(32) in tRNA(Thr) + S-adenosyl-L-homocysteine + H(+). It catalyses the reaction cytidine(32) in tRNA(Arg)(CCU) + S-adenosyl-L-methionine = N(3)-methylcytidine(32) in tRNA(Arg)(CCU) + S-adenosyl-L-homocysteine + H(+). Its function is as follows. S-adenosyl-L-methionine-dependent methyltransferase that mediates N(3)-methylcytidine modification of residue 32 of the tRNA anticodon loop of tRNA(Thr)(UGU) and tRNA(Arg)(CCU). N(3)-methylcytidine methylation by METTL2 requires the N6-threonylcarbamoylation of tRNA (t6A37) by the EKC/KEOPS complex as prerequisite. The chain is tRNA N(3)-cytidine methyltransferase METTL2 (METTL2) from Gallus gallus (Chicken).